A 447-amino-acid chain; its full sequence is Enolase (447 aa).

A (2R)-2-phosphoglycerate-binding site is contributed by glutamine 168. Glutamate 210 acts as the Proton donor in catalysis. Aspartate 247, glutamate 292, and aspartate 319 together coordinate Mg(2+). Lysine 344, arginine 373, serine 374, and lysine 395 together coordinate (2R)-2-phosphoglycerate. Lysine 344 acts as the Proton acceptor in catalysis.

Belongs to the enolase family. In terms of assembly, component of the RNA degradosome, a multiprotein complex involved in RNA processing and mRNA degradation. Mg(2+) serves as cofactor.

The protein localises to the cytoplasm. The protein resides in the secreted. It localises to the cell surface. The enzyme catalyses (2R)-2-phosphoglycerate = phosphoenolpyruvate + H2O. It participates in carbohydrate degradation; glycolysis; pyruvate from D-glyceraldehyde 3-phosphate: step 4/5. Catalyzes the reversible conversion of 2-phosphoglycerate (2-PG) into phosphoenolpyruvate (PEP). It is essential for the degradation of carbohydrates via glycolysis. The sequence is that of Enolase from Blochmanniella floridana.